The primary structure comprises 145 residues: D-aminoacyl-tRNA deacylase (145 aa).

Positions 137 to 138 match the Gly-cisPro motif, important for rejection of L-amino acids motif; it reads GP.

Belongs to the DTD family. In terms of assembly, homodimer.

It is found in the cytoplasm. The enzyme catalyses glycyl-tRNA(Ala) + H2O = tRNA(Ala) + glycine + H(+). The catalysed reaction is a D-aminoacyl-tRNA + H2O = a tRNA + a D-alpha-amino acid + H(+). Its function is as follows. An aminoacyl-tRNA editing enzyme that deacylates mischarged D-aminoacyl-tRNAs. Also deacylates mischarged glycyl-tRNA(Ala), protecting cells against glycine mischarging by AlaRS. Acts via tRNA-based rather than protein-based catalysis; rejects L-amino acids rather than detecting D-amino acids in the active site. By recycling D-aminoacyl-tRNA to D-amino acids and free tRNA molecules, this enzyme counteracts the toxicity associated with the formation of D-aminoacyl-tRNA entities in vivo and helps enforce protein L-homochirality. The sequence is that of D-aminoacyl-tRNA deacylase from Lactobacillus delbrueckii subsp. bulgaricus (strain ATCC 11842 / DSM 20081 / BCRC 10696 / JCM 1002 / NBRC 13953 / NCIMB 11778 / NCTC 12712 / WDCM 00102 / Lb 14).